The sequence spans 639 residues: Chaperone protein HtpG (639 aa).

Positions 1-343 are a; substrate-binding; sequence MEATATKEHL…SNDLPLNVSR (343 aa). Residues 344–564 are b; that stretch reads EILQESKDIE…THDMSGNLER (221 aa). The c stretch occupies residues 565–639; sequence LLKSAGQKVT…QLFLSTGSKE (75 aa).

Belongs to the heat shock protein 90 family. As to quaternary structure, homodimer.

The protein localises to the cytoplasm. In terms of biological role, molecular chaperone. Has ATPase activity. The sequence is that of Chaperone protein HtpG from Nitrosospira multiformis (strain ATCC 25196 / NCIMB 11849 / C 71).